The chain runs to 555 residues: Chaperonin GroEL 2 (555 aa).

Residues 29 to 32 (TLGP), 86 to 90 (DGTTT), Gly414, 480 to 482 (NAL), and Asp496 each bind ATP.

This sequence belongs to the chaperonin (HSP60) family. As to quaternary structure, forms a cylinder of 14 subunits composed of two heptameric rings stacked back-to-back. Interacts with the co-chaperonin GroES.

Its subcellular location is the cytoplasm. The enzyme catalyses ATP + H2O + a folded polypeptide = ADP + phosphate + an unfolded polypeptide.. Its function is as follows. Together with its co-chaperonin GroES, plays an essential role in assisting protein folding. The GroEL-GroES system forms a nano-cage that allows encapsulation of the non-native substrate proteins and provides a physical environment optimized to promote and accelerate protein folding. This chain is Chaperonin GroEL 2, found in Synechococcus sp. (strain ATCC 27144 / PCC 6301 / SAUG 1402/1) (Anacystis nidulans).